Here is a 301-residue protein sequence, read N- to C-terminus: 33 kDa chaperonin (301 aa).

2 disulfide bridges follow: Cys-239-Cys-241 and Cys-272-Cys-275.

The protein belongs to the HSP33 family. Under oxidizing conditions two disulfide bonds are formed involving the reactive cysteines. Under reducing conditions zinc is bound to the reactive cysteines and the protein is inactive.

Its subcellular location is the cytoplasm. In terms of biological role, redox regulated molecular chaperone. Protects both thermally unfolding and oxidatively damaged proteins from irreversible aggregation. Plays an important role in the bacterial defense system toward oxidative stress. In Trichormus variabilis (strain ATCC 29413 / PCC 7937) (Anabaena variabilis), this protein is 33 kDa chaperonin.